Here is a 490-residue protein sequence, read N- to C-terminus: Myocilin (490 aa).

Positions 1–18 (MPAVQLLLLAGLVWGAGA) are cleaved as a signal peptide. Residues 55–170 (SAIQDLQRDS…QEVARLARGQ (116 aa)) adopt a coiled-coil conformation. The disordered stretch occupies residues 168–187 (RGQCPQARDTSQDVPAGSRE). Residues 230-489 (GCGELVWVGQ…MVTYDIKLSK (260 aa)) enclose the Olfactomedin-like domain. Cysteine 231 and cysteine 419 form a disulfide bridge. Residues aspartate 366, asparagine 414, alanine 415, isoleucine 463, and aspartate 464 each contribute to the Ca(2+) site. The short motif at 488–490 (SKI) is the Microbody targeting signal element.

In terms of assembly, homodimer (via N-terminus). Can also form higher oligomers. Interacts with OLFM3, FN1, NRCAM, GLDN and NFASC. Interacts (via N-terminus) with MYL2. Interacts with SFRP1, FRZB, FZD7, FZD10, FZD1 and WIF1; regulates Wnt signaling. Interacts with SNTA1; regulates muscle hypertrophy. Interacts with ERBB2 and ERBB3; activates ERBB2-ERBB3 signaling pathway. Interacts with SNCG; affects its secretion and its aggregation. In terms of processing, palmitoylated. Glycosylated. Post-translationally, undergoes a calcium-dependent proteolytic cleavage at Arg-212 by CAPN2 in the endoplasmic reticulum. The result is the production of two fragments, one of 35 kDa containing the C-terminal olfactomedin-like domain, and another of 20 kDa containing the N-terminal leucine zipper-like domain. As to expression, detected in eye aqueous humor (at protein level).

The protein resides in the secreted. It is found in the golgi apparatus. It localises to the cytoplasmic vesicle. Its subcellular location is the extracellular space. The protein localises to the extracellular matrix. The protein resides in the extracellular exosome. It is found in the mitochondrion. It localises to the mitochondrion intermembrane space. Its subcellular location is the mitochondrion inner membrane. The protein localises to the mitochondrion outer membrane. The protein resides in the rough endoplasmic reticulum. It is found in the cell projection. It localises to the cilium. Its subcellular location is the endoplasmic reticulum. In terms of biological role, secreted glycoprotein regulating the activation of different signaling pathways in adjacent cells to control different processes including cell adhesion, cell-matrix adhesion, cytoskeleton organization and cell migration. Promotes substrate adhesion, spreading and formation of focal contacts. Negatively regulates cell-matrix adhesion and stress fiber assembly through Rho protein signal transduction. Modulates the organization of actin cytoskeleton by stimulating the formation of stress fibers through interactions with components of Wnt signaling pathways. Promotes cell migration through activation of PTK2 and the downstream phosphatidylinositol 3-kinase signaling. Plays a role in bone formation and promotes osteoblast differentiation in a dose-dependent manner through mitogen-activated protein kinase signaling. Mediates myelination in the peripheral nervous system through ERBB2/ERBB3 signaling. Plays a role as a regulator of muscle hypertrophy through the components of dystrophin-associated protein complex. Involved in positive regulation of mitochondrial depolarization. Plays a role in neurite outgrowth. May participate in the obstruction of fluid outflow in the trabecular meshwork. In Oryctolagus cuniculus (Rabbit), this protein is Myocilin.